Consider the following 127-residue polypeptide: Glycine cleavage system H protein 1 (127 aa).

Positions 20–101 (SVTVGITPYA…LGAGWFFRFI (82 aa)) constitute a Lipoyl-binding domain. K60 bears the N6-lipoyllysine mark.

This sequence belongs to the GcvH family. In terms of assembly, the glycine cleavage system is composed of four proteins: P, T, L and H. (R)-lipoate is required as a cofactor.

Functionally, the glycine cleavage system catalyzes the degradation of glycine. The H protein shuttles the methylamine group of glycine from the P protein to the T protein. This chain is Glycine cleavage system H protein 1, found in Pseudomonas syringae pv. tomato (strain ATCC BAA-871 / DC3000).